We begin with the raw amino-acid sequence, 389 residues long: Na(+)/H(+) antiporter NhaA 1 (389 aa).

11 helical membrane-spanning segments follow: residues 12-32, 62-82, 97-117, 128-148, 157-177, 184-204, 220-240, 260-280, 282-302, 331-351, and 365-385; these read VLNE…ALLV, FLLW…GLEL, IVLP…LFAL, GWAI…MMCG, IFLL…IAIF, IVAF…NILG, ISVL…AFFI, FWLA…VNLS, IDIG…LFVG, LYGV…IDGL, and LAIL…LKFF.

Belongs to the NhaA Na(+)/H(+) (TC 2.A.33) antiporter family.

Its subcellular location is the cell inner membrane. The catalysed reaction is Na(+)(in) + 2 H(+)(out) = Na(+)(out) + 2 H(+)(in). Na(+)/H(+) antiporter that extrudes sodium in exchange for external protons. This Campylobacter jejuni subsp. jejuni serotype O:6 (strain 81116 / NCTC 11828) protein is Na(+)/H(+) antiporter NhaA 1.